We begin with the raw amino-acid sequence, 519 residues long: 4-nitrophenol 2-monooxygenase, oxygenase component (519 aa).

It belongs to the FADH(2)-utilizing monooxygenase family. Homotetramer. 4-nitrophenol 2-monooxygenase complex consists of an oxygenase component NphA1 and a flavin reductase component NphA2. FAD serves as cofactor.

It carries out the reaction 4-nitrophenol + NADH + O2 + H(+) = 4-nitrocatechol + NAD(+) + H2O. Its activity is regulated as follows. Partially inhibited by concentrations of FAD above 10 uM and completely inhibited by concentrations above 50 uM. In terms of biological role, utilizes the flavins supplied by NphA2 to catalyze the degradation of 4-nitrophenol (4-NP) via 4-nitrocatechol (4-NC) which is used as the sole carbon, nitrogen, and energy source. Can also degrade phenol and 4-chlorophenol as rapidly as 4-NP. This chain is 4-nitrophenol 2-monooxygenase, oxygenase component (nphA1), found in Rhodococcus sp.